A 358-amino-acid chain; its full sequence is uncharacterized protein (358 aa).

29–36 (GPINSGKT) contributes to the ATP binding site.

The protein belongs to the archaeal ATPase family.

This is an uncharacterized protein from Methanocaldococcus jannaschii (strain ATCC 43067 / DSM 2661 / JAL-1 / JCM 10045 / NBRC 100440) (Methanococcus jannaschii).